We begin with the raw amino-acid sequence, 207 residues long: UPF0319 protein VV2327 (207 aa).

Residues 1-18 (MLRVLGLAGMLMSFNIHA) form the signal peptide.

The protein belongs to the UPF0319 family.

This chain is UPF0319 protein VV2327, found in Vibrio vulnificus (strain YJ016).